We begin with the raw amino-acid sequence, 265 residues long: MQPDLHCRTLAAHTLKHFRALSPLTHCMTNDVVQTFTANTLLALGASPAMVIDPVEARPFAAIANALLINVGTLTASRADAMRAAVESAYDAKTPWTLDPVAVGALEFRRRFCLDLLSLRPAAIRGNASEILALSGMALGGRGVDTTEAALAALPAAQALARQIDCIVVVTGEIDYVTNGQRTLSIPGGDPLMTRIVGTGCALSAVVAASCALPGAALDNVASACCWMKLAGQAAAERSEGPGSFIPAFLDALYHLDVEAANATN.

M50 is a binding site for substrate. The ATP site is built by R125 and T171. Position 198 (G198) interacts with substrate.

Belongs to the Thz kinase family. Mg(2+) serves as cofactor.

It catalyses the reaction 5-(2-hydroxyethyl)-4-methylthiazole + ATP = 4-methyl-5-(2-phosphooxyethyl)-thiazole + ADP + H(+). It functions in the pathway cofactor biosynthesis; thiamine diphosphate biosynthesis; 4-methyl-5-(2-phosphoethyl)-thiazole from 5-(2-hydroxyethyl)-4-methylthiazole: step 1/1. Catalyzes the phosphorylation of the hydroxyl group of 4-methyl-5-beta-hydroxyethylthiazole (THZ). The polypeptide is Hydroxyethylthiazole kinase (Salmonella typhimurium (strain LT2 / SGSC1412 / ATCC 700720)).